Consider the following 121-residue polypeptide: Ubiquitin-related modifier 1 (121 aa).

Glycine 121 carries the 1-thioglycine modification. Glycine 121 is covalently cross-linked (Glycyl lysine isopeptide (Gly-Lys) (interchain with K-? in acceptor proteins)).

This sequence belongs to the URM1 family. C-terminal thiocarboxylation occurs in 2 steps, it is first acyl-adenylated (-COAMP) via the hesA/moeB/thiF part of UBA4, then thiocarboxylated (-COSH) via the rhodanese domain of UBA4.

It is found in the cytoplasm. It participates in tRNA modification; 5-methoxycarbonylmethyl-2-thiouridine-tRNA biosynthesis. Acts as a sulfur carrier required for 2-thiolation of mcm(5)S(2)U at tRNA wobble positions of cytosolic tRNA(Lys), tRNA(Glu) and tRNA(Gln). Serves as sulfur donor in tRNA 2-thiolation reaction by being thiocarboxylated (-COSH) at its C-terminus by the MOCS3 homolog UBA4. The sulfur is then transferred to tRNA to form 2-thiolation of mcm(5)S(2)U. Prior mcm(5) tRNA modification by the elongator complex is required for 2-thiolation. Also acts as a ubiquitin-like protein (UBL) that is covalently conjugated via an isopeptide bond to lysine residues of target proteins such as AHP1. The thiocarboxylated form serves as substrate for conjugation and oxidative stress specifically induces the formation of UBL-protein conjugates. This is Ubiquitin-related modifier 1 from Ajellomyces capsulatus (strain NAm1 / WU24) (Darling's disease fungus).